We begin with the raw amino-acid sequence, 78 residues long: Large ribosomal subunit protein bL28 (78 aa).

It belongs to the bacterial ribosomal protein bL28 family.

This Treponema pallidum (strain Nichols) protein is Large ribosomal subunit protein bL28 (rpmB).